The chain runs to 62 residues: Coiled-coil domain-containing protein YLR146W-A (62 aa).

Positions 14–49 (EHARMLQNEIQQLFAQLRDTNSQIRCDLNEFEQIKE) form a coiled coil.

The chain is Coiled-coil domain-containing protein YLR146W-A from Saccharomyces cerevisiae (strain ATCC 204508 / S288c) (Baker's yeast).